A 212-amino-acid chain; its full sequence is Translation initiation factor IF-3 (212 aa).

It belongs to the IF-3 family. As to quaternary structure, monomer.

The protein resides in the cytoplasm. Its function is as follows. IF-3 binds to the 30S ribosomal subunit and shifts the equilibrium between 70S ribosomes and their 50S and 30S subunits in favor of the free subunits, thus enhancing the availability of 30S subunits on which protein synthesis initiation begins. The polypeptide is Translation initiation factor IF-3 (Synechococcus sp. (strain CC9311)).